Consider the following 243-residue polypeptide: HTH-type quorum sensing-dependent transcriptional regulator RpaR (243 aa).

The 66-residue stretch at 174 to 239 (KPIRRNRLTP…AAVAKALTLG (66 aa)) folds into the HTH luxR-type domain. A DNA-binding region (H-T-H motif) is located at residues 198-217 (AWEISVILCITERTVKFHLI).

This sequence belongs to the autoinducer-regulated transcriptional regulatory protein family.

Its function is as follows. Responds to the quorum-sensing autoinducer 4-coumaroyl-homoserine lactone to regulate expression of several genes. Represses expression of rpaI in the absence of the inducer. The chain is HTH-type quorum sensing-dependent transcriptional regulator RpaR from Rhodopseudomonas palustris (strain ATCC BAA-98 / CGA009).